The following is a 427-amino-acid chain: UPF0229 protein YeaH (427 aa).

The segment covering 79-90 (NDHFIQNDRIER) has biased composition (basic and acidic residues). The interval 79–110 (NDHFIQNDRIERPQGGGGGSGSGQGQASQDGE) is disordered. Gly residues predominate over residues 92-102 (QGGGGGSGSGQ).

It belongs to the UPF0229 family.

The polypeptide is UPF0229 protein YeaH (Salmonella paratyphi B (strain ATCC BAA-1250 / SPB7)).